We begin with the raw amino-acid sequence, 347 residues long: Phenylalanine--tRNA ligase alpha subunit (347 aa).

Mg(2+) is bound at residue glutamate 265.

The protein belongs to the class-II aminoacyl-tRNA synthetase family. Phe-tRNA synthetase alpha subunit type 1 subfamily. In terms of assembly, tetramer of two alpha and two beta subunits. Mg(2+) is required as a cofactor.

The protein resides in the cytoplasm. The catalysed reaction is tRNA(Phe) + L-phenylalanine + ATP = L-phenylalanyl-tRNA(Phe) + AMP + diphosphate + H(+). The protein is Phenylalanine--tRNA ligase alpha subunit of Wolbachia pipientis subsp. Culex pipiens (strain wPip).